The chain runs to 218 residues: tRNA (guanine-N(7)-)-methyltransferase (218 aa).

4 residues coordinate S-adenosyl-L-methionine: Glu45, Glu70, Asp97, and Asp119. Asp119 is a catalytic residue. Lys123 provides a ligand contact to substrate. The segment at 125 to 130 is interaction with RNA; it reads RHEKRR. Residues Asp155 and 195–198 contribute to the substrate site; that span reads TEYE.

Belongs to the class I-like SAM-binding methyltransferase superfamily. TrmB family.

It carries out the reaction guanosine(46) in tRNA + S-adenosyl-L-methionine = N(7)-methylguanosine(46) in tRNA + S-adenosyl-L-homocysteine. Its pathway is tRNA modification; N(7)-methylguanine-tRNA biosynthesis. Functionally, catalyzes the formation of N(7)-methylguanine at position 46 (m7G46) in tRNA. The sequence is that of tRNA (guanine-N(7)-)-methyltransferase from Lactobacillus acidophilus (strain ATCC 700396 / NCK56 / N2 / NCFM).